Here is a 500-residue protein sequence, read N- to C-terminus: Glycerol kinase (500 aa).

Threonine 12 provides a ligand contact to ADP. Residues threonine 12, threonine 13, and serine 14 each coordinate ATP. Residue threonine 12 coordinates sn-glycerol 3-phosphate. An ADP-binding site is contributed by arginine 16. Residues arginine 82, glutamate 83, tyrosine 135, and aspartate 245 each coordinate sn-glycerol 3-phosphate. 5 residues coordinate glycerol: arginine 82, glutamate 83, tyrosine 135, aspartate 245, and glutamine 246. ADP is bound by residues threonine 267 and glycine 310. Positions 267, 310, 314, and 411 each coordinate ATP. Residues glycine 411 and asparagine 415 each contribute to the ADP site.

It belongs to the FGGY kinase family. In terms of assembly, homotetramer and homodimer (in equilibrium).

The enzyme catalyses glycerol + ATP = sn-glycerol 3-phosphate + ADP + H(+). It functions in the pathway polyol metabolism; glycerol degradation via glycerol kinase pathway; sn-glycerol 3-phosphate from glycerol: step 1/1. Its activity is regulated as follows. Activated by phosphorylation and inhibited by fructose 1,6-bisphosphate (FBP). Functionally, key enzyme in the regulation of glycerol uptake and metabolism. Catalyzes the phosphorylation of glycerol to yield sn-glycerol 3-phosphate. This Clostridium perfringens (strain SM101 / Type A) protein is Glycerol kinase.